The following is a 303-amino-acid chain: Aspartate carbamoyltransferase catalytic subunit (303 aa).

Carbamoyl phosphate contacts are provided by Arg49 and Thr50. Residue Lys77 participates in L-aspartate binding. Residues Arg99, His126, and Gln129 each coordinate carbamoyl phosphate. The L-aspartate site is built by Arg159 and Arg211. Carbamoyl phosphate is bound by residues Ser252 and Pro253.

This sequence belongs to the aspartate/ornithine carbamoyltransferase superfamily. ATCase family. In terms of assembly, heterododecamer (2C3:3R2) of six catalytic PyrB chains organized as two trimers (C3), and six regulatory PyrI chains organized as three dimers (R2).

It catalyses the reaction carbamoyl phosphate + L-aspartate = N-carbamoyl-L-aspartate + phosphate + H(+). It participates in pyrimidine metabolism; UMP biosynthesis via de novo pathway; (S)-dihydroorotate from bicarbonate: step 2/3. Catalyzes the condensation of carbamoyl phosphate and aspartate to form carbamoyl aspartate and inorganic phosphate, the committed step in the de novo pyrimidine nucleotide biosynthesis pathway. The sequence is that of Aspartate carbamoyltransferase catalytic subunit from Listeria innocua serovar 6a (strain ATCC BAA-680 / CLIP 11262).